The following is a 202-amino-acid chain: Riboflavin synthase (202 aa).

Lumazine-binding repeat units follow at residues 1-101 and 102-198; these read MFTG…MGGH and LVFG…ARLA. 2,4-dihydroxypteridine-binding positions include 4–6, 47–49, 66–68, 105–107, Lys-140, 149–151, and 163–168; these read GII, CLT, EAW, GHV, SLT, and LLIRHS.

In terms of assembly, homotrimer.

It carries out the reaction 2 6,7-dimethyl-8-(1-D-ribityl)lumazine + H(+) = 5-amino-6-(D-ribitylamino)uracil + riboflavin. It participates in cofactor biosynthesis; riboflavin biosynthesis; riboflavin from 2-hydroxy-3-oxobutyl phosphate and 5-amino-6-(D-ribitylamino)uracil: step 2/2. Is inhibited by riboflavin. Product inhibition may be the major mechanism by which RS regulates its enzymatic activity in vivo. Its function is as follows. Catalyzes the dismutation of two molecules of 6,7-dimethyl-8-ribityllumazine, resulting in the formation of riboflavin and 5-amino-6-(D-ribitylamino)uracil. The chain is Riboflavin synthase from Brucella abortus (strain 2308).